The sequence spans 157 residues: uncharacterized protein (157 aa).

Helical transmembrane passes span 29–49, 52–72, 93–113, and 117–137; these read LLII…PAYF, VLHV…GFGI, LGSV…RTWL, and NEMF…TITA.

Its subcellular location is the cell membrane. This is an uncharacterized protein from Bacillus subtilis (strain 168).